The sequence spans 178 residues: Stage V sporulation protein T (178 aa).

The SpoVT-AbrB domain occupies 5–51; the sequence is GIVRRIDDLGRVVIPKEIRRTLRIREGDPLEIFVDRDGEVILKKYSP. The interval 56 to 178 is GAF-like; it reads GDFAKEYADA…AGFLARQMEQ (123 aa).

This sequence to B.subtilis AbrB and Abh. Homotetramer. Two monomers dimerize via their N-terminal swapped-hairpin domains. These dimers further associate into tetramers through helical interactions between their C-terminal GAF-like domains.

Functionally, transcriptional factor that positively regulates or negatively the expression of a large number of forespore-specific sigma G-dependent genes. May provide a mechanism of feedback control that is important for forespore development. SpoVT levels during spore formation have a major impact on the germination and the resistance of the resultant spores. The chain is Stage V sporulation protein T from Bacillus subtilis (strain 168).